The chain runs to 103 residues: UPF0145 protein BCE_1095 (103 aa).

The protein belongs to the UPF0145 family.

In Bacillus cereus (strain ATCC 10987 / NRS 248), this protein is UPF0145 protein BCE_1095.